The primary structure comprises 473 residues: tRNA modification GTPase MnmE (473 aa).

3 residues coordinate (6S)-5-formyl-5,6,7,8-tetrahydrofolate: Arg-30, Glu-95, and Arg-134. The TrmE-type G domain maps to 230–394; that stretch reads GVAAVIAGRP…LKSTMAGMVE (165 aa). Residues 240-245, 259-265, and 284-287 contribute to the GTP site; these read NAGKST, SHMPGTT, and DTAG. Ser-244 and Thr-265 together coordinate Mg(2+). Lys-473 provides a ligand contact to (6S)-5-formyl-5,6,7,8-tetrahydrofolate.

Belongs to the TRAFAC class TrmE-Era-EngA-EngB-Septin-like GTPase superfamily. TrmE GTPase family. Homodimer. Heterotetramer of two MnmE and two MnmG subunits. It depends on K(+) as a cofactor.

The protein resides in the cytoplasm. Functionally, exhibits a very high intrinsic GTPase hydrolysis rate. Involved in the addition of a carboxymethylaminomethyl (cmnm) group at the wobble position (U34) of certain tRNAs, forming tRNA-cmnm(5)s(2)U34. This chain is tRNA modification GTPase MnmE, found in Chlorobium phaeovibrioides (strain DSM 265 / 1930) (Prosthecochloris vibrioformis (strain DSM 265)).